A 219-amino-acid chain; its full sequence is Triosephosphate isomerase (219 aa).

6 to 8 is a substrate binding site; the sequence is NYK. His-90 acts as the Electrophile in catalysis. Glu-138 acts as the Proton acceptor in catalysis. Residues Ile-143, Gly-178, and 199–200 contribute to the substrate site; that span reads AS.

This sequence belongs to the triosephosphate isomerase family. As to quaternary structure, homotetramer; dimer of dimers.

It is found in the cytoplasm. It catalyses the reaction D-glyceraldehyde 3-phosphate = dihydroxyacetone phosphate. It functions in the pathway carbohydrate biosynthesis; gluconeogenesis. It participates in carbohydrate degradation; glycolysis; D-glyceraldehyde 3-phosphate from glycerone phosphate: step 1/1. Functionally, involved in the gluconeogenesis. Catalyzes stereospecifically the conversion of dihydroxyacetone phosphate (DHAP) to D-glyceraldehyde-3-phosphate (G3P). This is Triosephosphate isomerase from Methanocaldococcus jannaschii (strain ATCC 43067 / DSM 2661 / JAL-1 / JCM 10045 / NBRC 100440) (Methanococcus jannaschii).